The chain runs to 362 residues: Putative lipoprotein YdaJ (362 aa).

The N-terminal stretch at 1–20 (MRHVLIAVILFFLSIGLSAG) is a signal peptide. C21 carries the N-palmitoyl cysteine lipid modification. The S-diacylglycerol cysteine moiety is linked to residue C21.

It localises to the cell membrane. The sequence is that of Putative lipoprotein YdaJ (ydaJ) from Bacillus subtilis (strain 168).